Consider the following 840-residue polypeptide: Phosphatidylglycerol lysyltransferase (840 aa).

At 1–8 (MTQELKSK) the chain is on the cytoplasmic side. A helical membrane pass occupies residues 9-29 (LLSFFKFIFATALFIFVIFTL). Over 30-52 (YRELSHINFKETFIQFGKINRLW) the chain is Extracellular. The chain crosses the membrane as a helical span at residues 53–73 (LVLLFAGGGLSLILLSLYDII). The Cytoplasmic segment spans residues 74–89 (LVKALKLKMPLIRVFR). Residues 90–110 (VSYIINALNSIIGFGGFIGAG) traverse the membrane as a helical segment. The Extracellular segment spans residues 111–129 (VRAFVYKNYTNDTKKLVQY). A helical transmembrane segment spans residues 130 to 150 (ISIILVSMLTGLSLLSILVVL). The Cytoplasmic segment spans residues 151 to 161 (RIFNASHMIDE). Residues 162 to 182 (ISWVRWILYIVALFLPIFIFY) traverse the membrane as a helical segment. Residues 183–200 (TVARPVDRNNRYMGVYCT) are Extracellular-facing. The chain crosses the membrane as a helical span at residues 201 to 221 (VVSCVEWMAAATVLYFAALIV). Topologically, residues 222 to 229 (DIHISFMT) are cytoplasmic. A helical transmembrane segment spans residues 230-250 (FVGIFVIAALSGLVSFIPGGF). The Extracellular portion of the chain corresponds to 251–270 (GAFDLVVLLGLKSLGISEEK). A helical membrane pass occupies residues 271–291 (ILLALVLYRFAYYFVPVMIAL). The Cytoplasmic portion of the chain corresponds to 292 to 337 (ILSSFEFGNTAKKYLDNSKYFIPVKDFTSFLRSYQKDILAKVPSFS). The helical transmembrane segment at 338 to 358 (LAILIFLTSIIFFINNLTIVY) threads the bilayer. At 359-366 (DGLYDGNH) the chain is on the extracellular side. Residues 367 to 387 (FAYYIALAVQTSACLLLILNV) form a helical membrane-spanning segment. Residues 388–392 (RGIYK) are Cytoplasmic-facing. The helical transmembrane segment at 393–413 (GSRRAIIYAFISIILIASATI) threads the bilayer. Residues 414 to 415 (YT) lie on the Extracellular side of the membrane. Residues 416 to 436 (YASFLLLSWLIIIFVLLILAY) traverse the membrane as a helical segment. At 437-450 (QRAQVLKRPLRFKK) the chain is on the cytoplasmic side. The helical transmembrane segment at 451 to 471 (LAVMLLLSIFILYLNHILISG) threads the bilayer. At 472 to 489 (TLYALDVYHIEIDTSLLR) the chain is on the extracellular side. Residues 490–510 (YYFWMTIVIIMLLVGVIAWLF) traverse the membrane as a helical segment. Residues 511-840 (DYKYKCPHHS…LKVMRVIRHK (330 aa)) are Cytoplasmic-facing.

Belongs to the LPG synthase family.

It is found in the cell membrane. The enzyme catalyses L-lysyl-tRNA(Lys) + a 1,2-diacyl-sn-glycero-3-phospho-(1'-sn-glycerol) = a 1,2-diacyl-sn-glycero-3-phospho-1'-(3'-O-L-lysyl)-sn-glycerol + tRNA(Lys). Catalyzes the transfer of a lysyl group from L-lysyl-tRNA(Lys) to membrane-bound phosphatidylglycerol (PG), which produces lysylphosphatidylglycerol (LPG), a major component of the bacterial membrane with a positive net charge. LPG synthesis contributes to bacterial virulence as it is involved in the resistance mechanism against cationic antimicrobial peptides (CAMP) produces by the host's immune system (defensins, cathelicidins) and by the competing microorganisms (bacteriocins). In fact, the modification of anionic phosphatidylglycerol with positively charged L-lysine results in repulsion of the peptides. The chain is Phosphatidylglycerol lysyltransferase (mprF) from Staphylococcus epidermidis (strain ATCC 12228 / FDA PCI 1200).